The chain runs to 292 residues: Pantothenate synthetase (292 aa).

M30–H37 is a binding site for ATP. The Proton donor role is filled by H37. Q61 provides a ligand contact to (R)-pantoate. Q61 contacts beta-alanine. G147–D150 lines the ATP pocket. Q153 is a binding site for (R)-pantoate. V184–R187 provides a ligand contact to ATP.

Belongs to the pantothenate synthetase family. In terms of assembly, homodimer.

The protein resides in the cytoplasm. It carries out the reaction (R)-pantoate + beta-alanine + ATP = (R)-pantothenate + AMP + diphosphate + H(+). The protein operates within cofactor biosynthesis; (R)-pantothenate biosynthesis; (R)-pantothenate from (R)-pantoate and beta-alanine: step 1/1. Catalyzes the condensation of pantoate with beta-alanine in an ATP-dependent reaction via a pantoyl-adenylate intermediate. The protein is Pantothenate synthetase of Chlorobium phaeovibrioides (strain DSM 265 / 1930) (Prosthecochloris vibrioformis (strain DSM 265)).